The sequence spans 258 residues: UPF0246 protein YaaA (258 aa).

Belongs to the UPF0246 family.

The protein is UPF0246 protein YaaA of Shigella dysenteriae serotype 1 (strain Sd197).